Consider the following 160-residue polypeptide: MSLATLDTSQHPNLPSASATLFKAKAAKKFSFEQIAQHIGRNEVATAAIFYGQAKASPEDITNLASLLGIPQEVLEDQLNGFPDRGKSVEMPPKEPLIYRLYEIVQNYGYAYKAVLNEKFGDGIMSAISFSTKVEKETDADGNNWAVITLRGKWLPFSRF.

Catalysis depends on residues Arg-100, Glu-103, and Ser-126.

The protein belongs to the cyanase family.

The enzyme catalyses cyanate + hydrogencarbonate + 3 H(+) = NH4(+) + 2 CO2. Functionally, catalyzes the reaction of cyanate with bicarbonate to produce ammonia and carbon dioxide. This is Cyanate hydratase from Aspergillus oryzae (strain ATCC 42149 / RIB 40) (Yellow koji mold).